Reading from the N-terminus, the 612-residue chain is Zinc metalloproteinase-disintegrin-like 2d (612 aa).

The first 20 residues, 1 to 20 (MIQVLLVTICLAVFPYQGSS), serve as a signal peptide directing secretion. The propeptide occupies 21–189 (IILGSGNVND…KKASQLNLTP (169 aa)). The 197-residue stretch at 199-395 (KYIELVIVAD…NRPPCILNKP (197 aa)) folds into the Peptidase M12B domain. Ca(2+) is bound at residue Glu-202. Asn-218 carries N-linked (GlcNAc...) asparagine glycosylation. Asp-286 lines the Ca(2+) pocket. Disulfide bonds link Cys-310/Cys-390, Cys-350/Cys-374, and Cys-352/Cys-357. Residue His-335 coordinates Zn(2+). Glu-336 is an active-site residue. Positions 339 and 345 each coordinate Zn(2+). The Ca(2+) site is built by Cys-390, Asn-393, Val-405, Asn-408, Phe-410, Glu-412, Glu-415, and Asp-418. The 87-residue stretch at 403 to 489 (PPVCGNYFVE…DCPTDNFQRN (87 aa)) folds into the Disintegrin domain. Cystine bridges form between Cys-406–Cys-435, Cys-417–Cys-430, Cys-419–Cys-425, Cys-429–Cys-452, Cys-443–Cys-449, Cys-448–Cys-474, Cys-461–Cys-481, Cys-468–Cys-500, Cys-493–Cys-505, Cys-512–Cys-562, Cys-527–Cys-573, Cys-540–Cys-550, Cys-557–Cys-599, and Cys-593–Cys-605. Positions 467–469 (ECD) match the D/ECD-tripeptide motif.

The protein belongs to the venom metalloproteinase (M12B) family. P-III subfamily. Requires Zn(2+) as cofactor. In terms of tissue distribution, expressed by the venom gland.

The protein resides in the secreted. Its function is as follows. Snake venom metalloproteinase that impairs hemostasis in the envenomed animal. This Crotalus adamanteus (Eastern diamondback rattlesnake) protein is Zinc metalloproteinase-disintegrin-like 2d.